Reading from the N-terminus, the 708-residue chain is Pre-mRNA-splicing factor SPP382 (708 aa).

In terms of domain architecture, G-patch spans 61–108 (TYGIGAKLLSSMGYVAGKGLGKDGSGITTPIETQSRPMHNAGLGMFSN).

Component of the NTR complex (NTC-related complex), composed of NTR1, NTR2 and PRP43. Interacts with CLF1 and NTR2. Interacts with PRP43 and PRP45.

The protein localises to the cytoplasm. Its subcellular location is the nucleus. Functionally, involved in pre-mRNA splicing and spliceosome disassembly. Promotes release of excised lariat intron from the spliceosome by acting as a receptor for PRP43. This targeting of PRP43 leads to disassembly of the spliceosome with the separation of the U2, U5, U6 snRNPs and the NTC complex. In Saccharomyces cerevisiae (strain ATCC 204508 / S288c) (Baker's yeast), this protein is Pre-mRNA-splicing factor SPP382 (SPP382).